We begin with the raw amino-acid sequence, 385 residues long: S-adenosylmethionine synthase (385 aa).

An ATP-binding site is contributed by H16. Residue D18 participates in Mg(2+) binding. E44 provides a ligand contact to K(+). E57 and Q100 together coordinate L-methionine. Residues 100 to 110 (QSPDINQGVDK) are flexible loop. ATP contacts are provided by residues 165 to 167 (DAK), 231 to 232 (RF), D240, 246 to 247 (RK), A263, and K267. D240 lines the L-methionine pocket. K271 contributes to the L-methionine binding site.

The protein belongs to the AdoMet synthase family. As to quaternary structure, homotetramer; dimer of dimers. Mg(2+) is required as a cofactor. K(+) serves as cofactor.

It localises to the cytoplasm. The enzyme catalyses L-methionine + ATP + H2O = S-adenosyl-L-methionine + phosphate + diphosphate. Its pathway is amino-acid biosynthesis; S-adenosyl-L-methionine biosynthesis; S-adenosyl-L-methionine from L-methionine: step 1/1. Functionally, catalyzes the formation of S-adenosylmethionine (AdoMet) from methionine and ATP. The overall synthetic reaction is composed of two sequential steps, AdoMet formation and the subsequent tripolyphosphate hydrolysis which occurs prior to release of AdoMet from the enzyme. The sequence is that of S-adenosylmethionine synthase from Vibrio cholerae serotype O1 (strain ATCC 39315 / El Tor Inaba N16961).